The primary structure comprises 790 residues: Lon protease (790 aa).

The 198-residue stretch at Leu-23–Leu-220 folds into the Lon N-terminal domain. Gly-372 to Thr-379 contacts ATP. The 182-residue stretch at Ile-608–Arg-789 folds into the Lon proteolytic domain. Residues Ser-695 and Lys-738 contribute to the active site.

The protein belongs to the peptidase S16 family. Homohexamer. Organized in a ring with a central cavity.

The protein resides in the cytoplasm. The catalysed reaction is Hydrolysis of proteins in presence of ATP.. In terms of biological role, ATP-dependent serine protease that mediates the selective degradation of mutant and abnormal proteins as well as certain short-lived regulatory proteins. Required for cellular homeostasis and for survival from DNA damage and developmental changes induced by stress. Degrades polypeptides processively to yield small peptide fragments that are 5 to 10 amino acids long. Binds to DNA in a double-stranded, site-specific manner. The sequence is that of Lon protease from Syntrophus aciditrophicus (strain SB).